A 579-amino-acid chain; its full sequence is Putative ABC transporter ATP-binding protein VPA1482 (579 aa).

ABC transporter domains are found at residues 3 to 244 (IEFS…GIRE) and 299 to 533 (LEVR…ANLT). ATP-binding positions include 37–44 (GPSGSGKS) and 332–339 (GKNGSGKS).

The protein belongs to the ABC transporter superfamily.

It is found in the cell inner membrane. Its function is as follows. Probably part of an ABC transporter complex. Responsible for energy coupling to the transport system. This chain is Putative ABC transporter ATP-binding protein VPA1482, found in Vibrio parahaemolyticus serotype O3:K6 (strain RIMD 2210633).